A 230-amino-acid polypeptide reads, in one-letter code: ATP synthase subunit a (230 aa).

A run of 5 helical transmembrane segments spans residues 17-37 (LPITQSVLTTWFIMISLFIMA), 78-98 (IFPFVATLWIFILVSNLIGVI), 107-127 (DLSVTASLAMMTFLSVHWFGI), 165-187 (LFGNIMSLQLTALIVLMIAGFLV), and 198-218 (EAIIQAYIFGMLALIYIAGGI).

The protein belongs to the ATPase A chain family. As to quaternary structure, F-type ATPases have 2 components, CF(1) - the catalytic core - and CF(0) - the membrane proton channel. CF(1) has five subunits: alpha(3), beta(3), gamma(1), delta(1), epsilon(1). CF(0) has three main subunits: a(1), b(2) and c(9-12). The alpha and beta chains form an alternating ring which encloses part of the gamma chain. CF(1) is attached to CF(0) by a central stalk formed by the gamma and epsilon chains, while a peripheral stalk is formed by the delta and b chains.

It is found in the cell inner membrane. Its function is as follows. Key component of the proton channel; it plays a direct role in the translocation of protons across the membrane. In Legionella pneumophila (strain Corby), this protein is ATP synthase subunit a.